The sequence spans 123 residues: Large ribosomal subunit protein bL17 (123 aa).

It belongs to the bacterial ribosomal protein bL17 family. Part of the 50S ribosomal subunit. Contacts protein L32.

In Staphylococcus haemolyticus (strain JCSC1435), this protein is Large ribosomal subunit protein bL17.